The sequence spans 172 residues: Photosystem I assembly protein Ycf3 (172 aa).

TPR repeat units lie at residues 35–68, 72–105, and 120–153; these read AFSYYRDGMSAQSEGEYAEALENYYEALRLEEDP, SYILYNIGLIYASNGEYVKALEYYHQALDLNSQL, and GVKASEKKELDLARTLFDKAAEYWKQAIRLSPNN.

The protein belongs to the Ycf3 family.

The protein resides in the plastid. Its subcellular location is the chloroplast thylakoid membrane. Essential for the assembly of the photosystem I (PSI) complex. May act as a chaperone-like factor to guide the assembly of the PSI subunits. The sequence is that of Photosystem I assembly protein Ycf3 from Guillardia theta (Cryptophyte).